We begin with the raw amino-acid sequence, 239 residues long: NADH-quinone oxidoreductase subunit I 1 (239 aa).

4Fe-4S ferredoxin-type domains lie at 81 to 111 and 123 to 152; these read LVPREDGKPRCVACYMCATICPAQCIYIEAA and AKFVIDELRCIVCGFCVEACPKDAIRMDSG. 8 residues coordinate [4Fe-4S] cluster: cysteine 91, cysteine 94, cysteine 97, cysteine 101, cysteine 132, cysteine 135, cysteine 138, and cysteine 142.

Belongs to the complex I 23 kDa subunit family. As to quaternary structure, NDH-1 is composed of 14 different subunits. Subunits NuoA, H, J, K, L, M, N constitute the membrane sector of the complex. It depends on [4Fe-4S] cluster as a cofactor.

It localises to the cell inner membrane. The catalysed reaction is a quinone + NADH + 5 H(+)(in) = a quinol + NAD(+) + 4 H(+)(out). Its function is as follows. NDH-1 shuttles electrons from NADH, via FMN and iron-sulfur (Fe-S) centers, to quinones in the respiratory chain. The immediate electron acceptor for the enzyme in this species is believed to be ubiquinone. Couples the redox reaction to proton translocation (for every two electrons transferred, four hydrogen ions are translocated across the cytoplasmic membrane), and thus conserves the redox energy in a proton gradient. This is NADH-quinone oxidoreductase subunit I 1 from Anaeromyxobacter dehalogenans (strain 2CP-C).